The primary structure comprises 177 residues: MSLQDAHNSSSPSQKLPLWVQCLEHGQGLGLPHYATEGSAGLDLRAALPENESITLSPGQRALIPTGLIFHLSPGFEAQIRPRSGLALKNGITCLNTPGTIDSDYRGEVKVLLINLGQEDFIIERGMRIAQTVIAPVTQVEVRLLDPNSDLTSSQTDLSNQPNTGRGTGGFGSTGQK.

Substrate is bound by residues 83-85, N96, 100-102, and K110; these read RSG and TID. Residues 150–163 show a composition bias toward polar residues; that stretch reads DLTSSQTDLSNQPN. The tract at residues 150–177 is disordered; that stretch reads DLTSSQTDLSNQPNTGRGTGGFGSTGQK. Over residues 166–177 the composition is skewed to gly residues; that stretch reads RGTGGFGSTGQK.

The protein belongs to the dUTPase family. The cofactor is Mg(2+).

It carries out the reaction dUTP + H2O = dUMP + diphosphate + H(+). Its pathway is pyrimidine metabolism; dUMP biosynthesis; dUMP from dCTP (dUTP route): step 2/2. In terms of biological role, this enzyme is involved in nucleotide metabolism: it produces dUMP, the immediate precursor of thymidine nucleotides and it decreases the intracellular concentration of dUTP so that uracil cannot be incorporated into DNA. In Bartonella bacilliformis (strain ATCC 35685 / KC583 / Herrer 020/F12,63), this protein is Deoxyuridine 5'-triphosphate nucleotidohydrolase.